We begin with the raw amino-acid sequence, 466 residues long: 3-isopropylmalate dehydratase large subunit (466 aa).

Residues cysteine 347, cysteine 407, and cysteine 410 each contribute to the [4Fe-4S] cluster site.

The protein belongs to the aconitase/IPM isomerase family. LeuC type 1 subfamily. Heterodimer of LeuC and LeuD. [4Fe-4S] cluster serves as cofactor.

It carries out the reaction (2R,3S)-3-isopropylmalate = (2S)-2-isopropylmalate. Its pathway is amino-acid biosynthesis; L-leucine biosynthesis; L-leucine from 3-methyl-2-oxobutanoate: step 2/4. Its function is as follows. Catalyzes the isomerization between 2-isopropylmalate and 3-isopropylmalate, via the formation of 2-isopropylmaleate. In Escherichia fergusonii (strain ATCC 35469 / DSM 13698 / CCUG 18766 / IAM 14443 / JCM 21226 / LMG 7866 / NBRC 102419 / NCTC 12128 / CDC 0568-73), this protein is 3-isopropylmalate dehydratase large subunit.